We begin with the raw amino-acid sequence, 781 residues long: Mitochondrial inner membrane m-AAA protease component paraplegin (781 aa).

A mitochondrion-targeting transit peptide spans 1-43 (MAAALLLLRGLRPGPEPRPRRLWGLLSGRGPGLSSGAGARRPY). Disordered regions lie at residues 22 to 56 (LWGL…AAAG) and 103 to 135 (TSRM…ERED). The segment covering 36 to 56 (GAGARRPYAARGTPVGPAAAG) has biased composition (low complexity). Residues 44–105 (AARGTPVGPA…GSTLYFNTSR (62 aa)) constitute a propeptide, removed in mature form. Topologically, residues 106 to 144 (MKQKNKDNDKPKGKTPEDDEEEKRRKEREDQMYRERLRT) are mitochondrial matrix. Basic and acidic residues predominate over residues 109 to 135 (KNKDNDKPKGKTPEDDEEEKRRKERED). The chain crosses the membrane as a helical span at residues 145–165 (LFIIALVMSLLNSLSTSGGSI). Residues 166–248 (SWADFVNEML…DRIPVSYKRT (83 aa)) lie on the Mitochondrial intermembrane side of the membrane. A helical membrane pass occupies residues 249 to 269 (GFFGNALYALGMTAVGLAILW). Residues 270 to 781 (YVFRLAGMTG…ASGEEEAPAP (512 aa)) are Mitochondrial matrix-facing. ATP is bound by residues Ala-312, Gly-352, Cys-353, Gly-354, Lys-355, Thr-356, and Leu-357. At Tyr-505 the chain carries 3'-nitrotyrosine. Position 574 (His-574) interacts with Zn(2+). Glu-575 is an active-site residue. 2 residues coordinate Zn(2+): His-578 and Asp-650. An interaction with PPIF region spans residues 701–781 (HEAKLLVAKA…ASGEEEAPAP (81 aa)).

The protein in the N-terminal section; belongs to the AAA ATPase family. This sequence in the C-terminal section; belongs to the peptidase M41 family. In terms of assembly, forms heterohexamers with SPG7 and AFG3L1. The m-AAA protease is either composed of homohexamers of AFG3L2 or heterohexamers of AFG3L1, AFG3L2 and/or SPG7. Component of the mitochondrial permeability transition pore complex (mPTPC), at least composed of SPG7, VDAC1 and PPIF. Interacts with MAIP1. The cofactor is Zn(2+). In terms of processing, upon import into the mitochondrion, the N-terminal transit peptide is cleaved by the mitochondrial-processing peptidase (MPP) to generate an intermediate form which undergoes a second proteolytic cleavage mediated by proteases AFG3L1 and/or AFG3L2 removing an additional N-terminal fragment to generate the proteolytically active mature form. In terms of tissue distribution, expressed in the brain and retina (at protein level).

Its subcellular location is the mitochondrion inner membrane. The enzyme catalyses ATP + H2O = ADP + phosphate + H(+). Its function is as follows. Catalytic component of the m-AAA protease, a protease that plays a key role in proteostasis of inner mitochondrial membrane proteins, and which is essential for axonal and neuron development. SPG7 possesses both ATPase and protease activities: the ATPase activity is required to unfold substrates, threading them into the internal proteolytic cavity for hydrolysis into small peptide fragments. The m-AAA protease exerts a dual role in the mitochondrial inner membrane: it mediates the processing of specific regulatory proteins and ensures protein quality control by degrading misfolded polypeptides. Mediates protein maturation of the mitochondrial ribosomal subunit MRPL32/bL32m by catalyzing the cleavage of the presequence of MRPL32/bL32m prior to assembly into the mitochondrial ribosome. Acts as a regulator of calcium in neurons by mediating degradation of SMDT1/EMRE before its assembly with the uniporter complex, limiting the availability of SMDT1/EMRE for MCU assembly and promoting efficient assembly of gatekeeper subunits with MCU. Also regulates mitochondrial calcium by catalyzing degradation of MCU. Plays a role in the formation and regulation of the mitochondrial permeability transition pore (mPTP) and its proteolytic activity is dispensable for this function. The chain is Mitochondrial inner membrane m-AAA protease component paraplegin from Mus musculus (Mouse).